The primary structure comprises 293 residues: Small ribosomal subunit biogenesis GTPase RsgA (293 aa).

A CP-type G domain is found at 63 to 223 (KNELVRPPIA…VADTPGFSSL (161 aa)). GTP-binding positions include 112–115 (SKMD) and 166–174 (GQSGVGKSS). Positions 247, 252, 254, and 260 each coordinate Zn(2+).

Belongs to the TRAFAC class YlqF/YawG GTPase family. RsgA subfamily. Monomer. Associates with 30S ribosomal subunit, binds 16S rRNA. Zn(2+) is required as a cofactor.

The protein localises to the cytoplasm. Its function is as follows. One of several proteins that assist in the late maturation steps of the functional core of the 30S ribosomal subunit. Helps release RbfA from mature subunits. May play a role in the assembly of ribosomal proteins into the subunit. Circularly permuted GTPase that catalyzes slow GTP hydrolysis, GTPase activity is stimulated by the 30S ribosomal subunit. This Bacillus anthracis protein is Small ribosomal subunit biogenesis GTPase RsgA.